A 178-amino-acid chain; its full sequence is Ribosome maturation factor RimM (178 aa).

A PRC barrel domain is found at 99 to 178; sequence EGDFYWHDLI…TIEVDWDAGF (80 aa).

This sequence belongs to the RimM family. In terms of assembly, binds ribosomal protein uS19.

It localises to the cytoplasm. An accessory protein needed during the final step in the assembly of 30S ribosomal subunit, possibly for assembly of the head region. Essential for efficient processing of 16S rRNA. May be needed both before and after RbfA during the maturation of 16S rRNA. It has affinity for free ribosomal 30S subunits but not for 70S ribosomes. This chain is Ribosome maturation factor RimM, found in Mannheimia succiniciproducens (strain KCTC 0769BP / MBEL55E).